The primary structure comprises 472 residues: Glutamate--tRNA ligase 1 (472 aa).

Positions 13 to 23 (PSPTGYLHIGG) match the 'HIGH' region motif. Positions 102, 104, 129, and 131 each coordinate Zn(2+). Residues 239 to 243 (RLSKR) carry the 'KMSKS' region motif. Lys242 provides a ligand contact to ATP.

This sequence belongs to the class-I aminoacyl-tRNA synthetase family. Glutamate--tRNA ligase type 1 subfamily. In terms of assembly, monomer. Requires Zn(2+) as cofactor.

The protein resides in the cytoplasm. It carries out the reaction tRNA(Glu) + L-glutamate + ATP = L-glutamyl-tRNA(Glu) + AMP + diphosphate. Its function is as follows. Catalyzes the attachment of glutamate to tRNA(Glu) in a two-step reaction: glutamate is first activated by ATP to form Glu-AMP and then transferred to the acceptor end of tRNA(Glu). The chain is Glutamate--tRNA ligase 1 from Syntrophus aciditrophicus (strain SB).